A 476-amino-acid chain; its full sequence is Aspartyl/glutamyl-tRNA(Asn/Gln) amidotransferase subunit B (476 aa).

Belongs to the GatB/GatE family. GatB subfamily. In terms of assembly, heterotrimer of A, B and C subunits.

It catalyses the reaction L-glutamyl-tRNA(Gln) + L-glutamine + ATP + H2O = L-glutaminyl-tRNA(Gln) + L-glutamate + ADP + phosphate + H(+). The enzyme catalyses L-aspartyl-tRNA(Asn) + L-glutamine + ATP + H2O = L-asparaginyl-tRNA(Asn) + L-glutamate + ADP + phosphate + 2 H(+). Allows the formation of correctly charged Asn-tRNA(Asn) or Gln-tRNA(Gln) through the transamidation of misacylated Asp-tRNA(Asn) or Glu-tRNA(Gln) in organisms which lack either or both of asparaginyl-tRNA or glutaminyl-tRNA synthetases. The reaction takes place in the presence of glutamine and ATP through an activated phospho-Asp-tRNA(Asn) or phospho-Glu-tRNA(Gln). This Lactobacillus johnsonii (strain CNCM I-12250 / La1 / NCC 533) protein is Aspartyl/glutamyl-tRNA(Asn/Gln) amidotransferase subunit B.